The following is a 317-amino-acid chain: ATP synthase gamma chain (317 aa).

The protein belongs to the ATPase gamma chain family. As to quaternary structure, F-type ATPases have 2 components, CF(1) - the catalytic core - and CF(0) - the membrane proton channel. CF(1) has five subunits: alpha(3), beta(3), gamma(1), delta(1), epsilon(1). CF(0) has three main subunits: a, b and c.

It is found in the cellular thylakoid membrane. In terms of biological role, produces ATP from ADP in the presence of a proton gradient across the membrane. The gamma chain is believed to be important in regulating ATPase activity and the flow of protons through the CF(0) complex. The protein is ATP synthase gamma chain of Synechococcus sp. (strain CC9902).